Here is a 243-residue protein sequence, read N- to C-terminus: Terpene cyclase penB (243 aa).

The next 3 helical transmembrane spans lie at isoleucine 19–isoleucine 39, tyrosine 48–isoleucine 68, and glycine 78–alanine 98. Asparagine 111 is a glycosylation site (N-linked (GlcNAc...) asparagine). The next 4 membrane-spanning stretches (helical) occupy residues leucine 112–alanine 132, serine 137–cysteine 157, leucine 172–tryptophan 194, and leucine 205–tryptophan 225.

This sequence belongs to the paxB family.

It localises to the membrane. The protein operates within secondary metabolite biosynthesis. Its function is as follows. Terpene cyclase; part of the gene cluster that mediates the biosynthesis of the indole diterpenes penitrems. The geranylgeranyl diphosphate (GGPP) synthase penG catalyzes the first step in penitrem biosynthesis via conversion of farnesyl pyrophosphate and isopentyl pyrophosphate into geranylgeranyl pyrophosphate (GGPP). Condensation of indole-3-glycerol phosphate with GGPP by the prenyl transferase penC then forms 3-geranylgeranylindole (3-GGI). Epoxidation by the FAD-dependent monooxygenase penM leads to a epoxidized-GGI that is substrate of the terpene cyclase penB for cyclization to yield paspaline. Paspaline is subsequently converted to 13-desoxypaxilline by the cytochrome P450 monooxygenase penP, the latter being then converted to paxilline by the cytochrome P450 monooxygenase penQ. Paxilline is converted to beta-paxitriol via C-10 ketoreduction by the short-chain dehydrogenase PC-15 which can be monoprenylated at the C-20 by the indole diterpene prenyltransferase penD. A two-step elimination (acetylation and elimination) process performed by the O-acetyltransferase PC-16 and the P.simplicissimum ptmI-ortholog not yet identified in P.crustosum, leads to the production of the prenylated form of penijanthine. The FAD-linked oxidoreductase ptmO then converts the prenylated form of penijanthine into PC-M5 which is in turn transformed into PC-M4 by the aromatic dimethylallyltransferase PC-22. A series of oxidation steps involving 4 cytochrome P450 monooxygenases (PC-21, PC-05, PC-23, PC-20) and a FAD-dependent monooxygenase (PC-14) are required for the transformation of PC-M4 to penitrems A and E. Synthesis of these final products is proposed to proceed via penitrems D and C (PC-21, PC-05, PC-14) and penitrems B and F (PC-21, PC-05, PC-14, PC-23). This is Terpene cyclase penB (penB) from Penicillium crustosum (Blue mold fungus).